A 300-amino-acid chain; its full sequence is Formate dehydrogenase-O iron-sulfur subunit (300 aa).

The Cytoplasmic portion of the chain corresponds to 1-260 (MAYQSQDIIR…KFWKGIWKPL (260 aa)). 4Fe-4S ferredoxin-type domains follow at residues 30 to 60 (VAKLIDVTTCIGCKACQVACSEWNDIRDTVG), 91 to 123 (LEWLIRKDGCMHCSDPGCLKACPAEGAIIQYAN), 124 to 153 (GIVDFQSEQCIGCGYCIAGCPFDIPRLNPE), and 158 to 189 (YKCTLCVDRVVVGQEPACVKTCPTGAIHFGTK). 16 residues coordinate [4Fe-4S] cluster: Cys-39, Cys-42, Cys-45, Cys-49, Cys-100, Cys-103, Cys-108, Cys-112, Cys-133, Cys-136, Cys-139, Cys-143, Cys-160, Cys-163, Cys-175, and Cys-179. Residues 261 to 279 (AAVGFAATFAASIFHYVGV) form a helical membrane-spanning segment. The Periplasmic segment spans residues 280–300 (GPNRADEEENNLHEEKDEERK).

In terms of assembly, formate dehydrogenase is a membrane-bound complex, formed by subunits alpha, beta and gamma. [4Fe-4S] cluster is required as a cofactor.

The protein localises to the cell membrane. Its function is as follows. Allows to use formate as major electron donor during aerobic respiration. The beta chain is an electron transfer unit containing 4 cysteine clusters involved in the formation of iron-sulfur centers. Electrons are transferred from the gamma chain to the molybdenum cofactor of the alpha subunit. The protein is Formate dehydrogenase-O iron-sulfur subunit (fdoH) of Escherichia coli (strain K12).